We begin with the raw amino-acid sequence, 431 residues long: Enolase (431 aa).

Residue Q167 coordinates (2R)-2-phosphoglycerate. The Proton donor role is filled by E209. Residues D246, E289, and D316 each coordinate Mg(2+). The (2R)-2-phosphoglycerate site is built by K341, R370, S371, and K392. The Proton acceptor role is filled by K341.

Belongs to the enolase family. As to quaternary structure, component of the RNA degradosome, a multiprotein complex involved in RNA processing and mRNA degradation. Requires Mg(2+) as cofactor.

It is found in the cytoplasm. The protein localises to the secreted. It localises to the cell surface. The enzyme catalyses (2R)-2-phosphoglycerate = phosphoenolpyruvate + H2O. Its pathway is carbohydrate degradation; glycolysis; pyruvate from D-glyceraldehyde 3-phosphate: step 4/5. Catalyzes the reversible conversion of 2-phosphoglycerate (2-PG) into phosphoenolpyruvate (PEP). It is essential for the degradation of carbohydrates via glycolysis. This Chromohalobacter salexigens (strain ATCC BAA-138 / DSM 3043 / CIP 106854 / NCIMB 13768 / 1H11) protein is Enolase.